Here is a 97-residue protein sequence, read N- to C-terminus: Large ribosomal subunit protein uL23 (97 aa).

This sequence belongs to the universal ribosomal protein uL23 family. As to quaternary structure, part of the 50S ribosomal subunit. Contacts protein L29, and trigger factor when it is bound to the ribosome.

Its function is as follows. One of the early assembly proteins it binds 23S rRNA. One of the proteins that surrounds the polypeptide exit tunnel on the outside of the ribosome. Forms the main docking site for trigger factor binding to the ribosome. This Clostridium perfringens (strain SM101 / Type A) protein is Large ribosomal subunit protein uL23.